The following is a 256-amino-acid chain: Fat body protein 2 (256 aa).

10-34 is a binding site for NAD(+); it reads VYVGSFSGIGWQMMMQLMQKDIKMM. A substrate-binding site is contributed by Ser138. Tyr151 serves as the catalytic Proton acceptor.

This sequence belongs to the short-chain dehydrogenases/reductases (SDR) family.

In Drosophila melanogaster (Fruit fly), this protein is Fat body protein 2 (Fbp2).